Consider the following 102-residue polypeptide: Small ribosomal subunit protein uS10 (102 aa).

It belongs to the universal ribosomal protein uS10 family. As to quaternary structure, part of the 30S ribosomal subunit.

In terms of biological role, involved in the binding of tRNA to the ribosomes. This chain is Small ribosomal subunit protein uS10, found in Nitrosomonas eutropha (strain DSM 101675 / C91 / Nm57).